Here is a 292-residue protein sequence, read N- to C-terminus: MITGSLVAIVTPMHEDGSLDYPRLRSLIDFHVAEGTDGIVVVGTTGESPTVNVEEHCELIRTTVEHAAGRIPVIAGAGGNSTAEAIELASFAQEAGAVAQLSVVPYYNRPTQEGLYRHFRSIAEAVELPLILYNVPGRTVADLSNDTTLRLAEIPNIIGIKDATGSIDRACDLIERAPKDFALYTGDDMSAAAFILLGGHGTISVTANVAPRAMHEMCAAALAGEALRVREINGRLVGLHRDLFCEANPIPVKWAVARMGLIESGIRLPLTPLSSASQERVLLAMRRAGVNV.

Threonine 45 provides a ligand contact to pyruvate. The active-site Proton donor/acceptor is the tyrosine 133. Lysine 161 serves as the catalytic Schiff-base intermediate with substrate. A pyruvate-binding site is contributed by isoleucine 203.

Belongs to the DapA family. As to quaternary structure, homotetramer; dimer of dimers.

It localises to the cytoplasm. The enzyme catalyses L-aspartate 4-semialdehyde + pyruvate = (2S,4S)-4-hydroxy-2,3,4,5-tetrahydrodipicolinate + H2O + H(+). Its pathway is amino-acid biosynthesis; L-lysine biosynthesis via DAP pathway; (S)-tetrahydrodipicolinate from L-aspartate: step 3/4. Functionally, catalyzes the condensation of (S)-aspartate-beta-semialdehyde [(S)-ASA] and pyruvate to 4-hydroxy-tetrahydrodipicolinate (HTPA). This chain is 4-hydroxy-tetrahydrodipicolinate synthase, found in Aromatoleum aromaticum (strain DSM 19018 / LMG 30748 / EbN1) (Azoarcus sp. (strain EbN1)).